The sequence spans 432 residues: Adenylosuccinate synthetase 2 (432 aa).

GTP contacts are provided by residues 13 to 19 (GDEGKGK) and 41 to 43 (GHT). Catalysis depends on Asp-14, which acts as the Proton acceptor. The Mg(2+) site is built by Asp-14 and Gly-41. Residues 14–17 (DEGK), 39–42 (NAGH), Thr-130, Arg-144, Gln-225, Thr-240, and Arg-304 contribute to the IMP site. Catalysis depends on His-42, which acts as the Proton donor. Residue 300-306 (ATTGRSR) coordinates substrate. GTP contacts are provided by residues Arg-306, 332-334 (KLD), and 415-417 (STG).

Belongs to the adenylosuccinate synthetase family. Homodimer. The cofactor is Mg(2+).

The protein localises to the cytoplasm. The enzyme catalyses IMP + L-aspartate + GTP = N(6)-(1,2-dicarboxyethyl)-AMP + GDP + phosphate + 2 H(+). It functions in the pathway purine metabolism; AMP biosynthesis via de novo pathway; AMP from IMP: step 1/2. In terms of biological role, plays an important role in the de novo pathway of purine nucleotide biosynthesis. Catalyzes the first committed step in the biosynthesis of AMP from IMP. The sequence is that of Adenylosuccinate synthetase 2 from Photorhabdus laumondii subsp. laumondii (strain DSM 15139 / CIP 105565 / TT01) (Photorhabdus luminescens subsp. laumondii).